Consider the following 359-residue polypeptide: Trans-enoyl reductase mpsG (359 aa).

NADP(+)-binding residues include Tyr-212, Leu-259, and Thr-278.

This sequence belongs to the zinc-containing alcohol dehydrogenase family. Monomer.

It participates in secondary metabolite biosynthesis. Trans-enoyl reductase; part of the gene cluster that mediates the biosynthesis of macrophasetins, 3-decalinoyltetramic acids (DTAs) which feature a tetramate (pyrrolidine-2,4-dione) unit connected to a decalin fragment and that have potent bioactivities. The PKS-NRPS mpsA together with its associated enoylreductase partner mpsG incorporate one unit of acetyl-CoA, seven units of malonyl-CoA, and one unit of L-alanine to assemble the linear tetramic acid intermediate corresponding to the backbone of macrophasetins. Without the Diels-Alderase mpsD, the mpsA/G product can undergo the non-enzymatic intramolecular Diels-Alder (IMDA) reaction to generate both macrophasetin A and macrophasetin B. Catalyzed by mpsD, the linear tetramic acid intermediate is thoroughly converted to macrophasetin A via the endo-IMDA reaction in a regioselective and stereoselective manner. Finally, the cytochrome P450 monooxygenase mpsF catalyzes the hydroxylation at C20 to yield the end product macrophasetin C. In Macrophomina phaseolina (strain MS6) (Charcoal rot fungus), this protein is Trans-enoyl reductase mpsG.